A 62-amino-acid chain; its full sequence is MARYRRSRTRSRSPRSRRRRRRSGRRRSPRRRRRYGSARRSRRSVGGRRRRYGSRRRRRRRY.

A disordered region spans residues 1-62 (MARYRRSRTR…GSRRRRRRRY (62 aa)). Position 9 is a phosphothreonine (T9).

Belongs to the protamine P1 family. As to expression, testis.

Its subcellular location is the nucleus. It is found in the chromosome. Its function is as follows. Protamines substitute for histones in the chromatin of sperm during the haploid phase of spermatogenesis. They compact sperm DNA into a highly condensed, stable and inactive complex. In Gallus gallus (Chicken), this protein is Sperm histone.